Here is a 558-residue protein sequence, read N- to C-terminus: Tektin-5 (558 aa).

Positions 347-381 (ISEETDVKNKLQTQLAKILQEIFQAENTIMLLERA) form a coiled coil.

This sequence belongs to the tektin family. As to quaternary structure, microtubule inner protein component of sperm flagellar doublet microtubules. Interacts with TEKT3. In terms of processing, ubiquitinated, leading to its degradation. Deubiquitinated by USP16, promoting its stability. As to expression, specifically expressed in testis.

The protein localises to the cytoplasm. It localises to the cytoskeleton. It is found in the flagellum axoneme. Sperm-specific microtubule inner protein (MIP) part of the dynein-decorated doublet microtubules (DMTs) in flagellar axoneme. Forms an extensive interaction network in different conformations that reinforces the helix bundle composed by other tektin proteins (TEKT1 to TEKT4) and MIPs to anchor the tektin bundle onto the tubulin wall of A-tubule of the sperm flagellum. The polypeptide is Tektin-5 (Rattus norvegicus (Rat)).